A 297-amino-acid chain; its full sequence is MSEQISEQSEQNVYGASSPVPAGESSPSAASAPRTKVRTHHLQKWKAEGHKWAMLTVYDYSTARAFDDAGIPVLLVGDSAANVVYGYDTTVPISIDELIPLVRGVVRGAPHALVVADLPFGSYESGPSAALAAATRFMKEAGAHAVKLEGGERVAEQIACLTAAGIPVMAHIGFTPQSVNTLGGFRVQGRGDAAEQTIADAIAVAEAGAFSVVMEMVPAELATQITGKLTIPTIGIGAGPSCDGQVLVWQDMAGLSSGKAPRFVKRYADVGGELRRAAVQYAQDVAGGVFPAEEHCF.

Over residues 1-15 (MSEQISEQSEQNVYG) the composition is skewed to polar residues. The segment at 1–40 (MSEQISEQSEQNVYGASSPVPAGESSPSAASAPRTKVRTH) is disordered. Over residues 16–33 (ASSPVPAGESSPSAASAP) the composition is skewed to low complexity. Asp78 and Asp117 together coordinate Mg(2+). Residues 78 to 79 (DS), Asp117, and Lys147 each bind 3-methyl-2-oxobutanoate. Glu149 contacts Mg(2+). The active-site Proton acceptor is Glu215.

The protein belongs to the PanB family. In terms of assembly, homodecamer; pentamer of dimers. Mg(2+) serves as cofactor.

The protein resides in the cytoplasm. The enzyme catalyses 3-methyl-2-oxobutanoate + (6R)-5,10-methylene-5,6,7,8-tetrahydrofolate + H2O = 2-dehydropantoate + (6S)-5,6,7,8-tetrahydrofolate. It participates in cofactor biosynthesis; (R)-pantothenate biosynthesis; (R)-pantoate from 3-methyl-2-oxobutanoate: step 1/2. Functionally, catalyzes the reversible reaction in which hydroxymethyl group from 5,10-methylenetetrahydrofolate is transferred onto alpha-ketoisovalerate to form ketopantoate. This Mycobacterium marinum (strain ATCC BAA-535 / M) protein is 3-methyl-2-oxobutanoate hydroxymethyltransferase.